Here is a 737-residue protein sequence, read N- to C-terminus: Protein penguin (737 aa).

Residues Met-1–Lys-128 are disordered. 2 stretches are compositionally biased toward basic and acidic residues: residues Lys-76–Leu-89 and Glu-107–Asp-122. The region spanning Glu-139–Ile-490 is the PUM-HD domain. Pumilio repeat units follow at residues Asn-167 to Glu-202, Lys-203 to Asp-238, Ser-239 to Gln-274, Asn-388 to Asp-425, and His-426 to Arg-462. Residues Val-577–Ser-638 are disordered. A compositionally biased stretch (acidic residues) spans Ser-580–Glu-600. The segment covering Lys-601–Val-615 has biased composition (basic and acidic residues). Basic residues predominate over residues Lys-616–Lys-626.

This Drosophila melanogaster (Fruit fly) protein is Protein penguin.